A 414-amino-acid chain; its full sequence is NADH-quinone oxidoreductase subunit D (414 aa).

The protein belongs to the complex I 49 kDa subunit family. In terms of assembly, NDH-1 is composed of 14 different subunits. Subunits NuoB, C, D, E, F, and G constitute the peripheral sector of the complex.

It localises to the cell inner membrane. The catalysed reaction is a quinone + NADH + 5 H(+)(in) = a quinol + NAD(+) + 4 H(+)(out). NDH-1 shuttles electrons from NADH, via FMN and iron-sulfur (Fe-S) centers, to quinones in the respiratory chain. The immediate electron acceptor for the enzyme in this species is believed to be ubiquinone. Couples the redox reaction to proton translocation (for every two electrons transferred, four hydrogen ions are translocated across the cytoplasmic membrane), and thus conserves the redox energy in a proton gradient. This chain is NADH-quinone oxidoreductase subunit D, found in Akkermansia muciniphila (strain ATCC BAA-835 / DSM 22959 / JCM 33894 / BCRC 81048 / CCUG 64013 / CIP 107961 / Muc).